A 226-amino-acid chain; its full sequence is Protein AhpA (226 aa).

2 helical membrane-spanning segments follow: residues 12–32 (SMIS…LFGV) and 169–189 (GELI…HYFL).

This sequence belongs to the Smp family.

It localises to the cell inner membrane. When anaerobically expressed in wild-type E.coli K12 confers a hemolytic phenotype, but not in an sheA mutant. Suggests it affects the expression of the latent E.coli K12 hemolysin sheA under anaerobic conditions. The protein is Protein AhpA (ahpA) of Pasteurella multocida (strain Pm70).